The primary structure comprises 555 residues: Chaperonin GroEL (555 aa).

Residues 29–32 (TLGP), lysine 50, 86–90 (DGTTT), glycine 418, and aspartate 499 contribute to the ATP site. The disordered stretch occupies residues 528 to 555 (HEEDNNTGNRSGGGVGGGHHGGMGGMDF). Gly residues predominate over residues 537–555 (RSGGGVGGGHHGGMGGMDF).

The protein belongs to the chaperonin (HSP60) family. Forms a cylinder of 14 subunits composed of two heptameric rings stacked back-to-back. Interacts with the co-chaperonin GroES.

Its subcellular location is the cytoplasm. The catalysed reaction is ATP + H2O + a folded polypeptide = ADP + phosphate + an unfolded polypeptide.. Its function is as follows. Together with its co-chaperonin GroES, plays an essential role in assisting protein folding. The GroEL-GroES system forms a nano-cage that allows encapsulation of the non-native substrate proteins and provides a physical environment optimized to promote and accelerate protein folding. The sequence is that of Chaperonin GroEL from Orientia tsutsugamushi (Rickettsia tsutsugamushi).